A 99-amino-acid chain; its full sequence is DNA-binding protein Fis (99 aa).

Positions 75 to 94 form a DNA-binding region, H-T-H motif; it reads QTRAAIMMGINRGTLRKKLK.

Belongs to the transcriptional regulatory Fis family. As to quaternary structure, homodimer.

In terms of biological role, activates ribosomal RNA transcription. Plays a direct role in upstream activation of rRNA promoters. This chain is DNA-binding protein Fis, found in Tolumonas auensis (strain DSM 9187 / NBRC 110442 / TA 4).